Here is a 64-residue protein sequence, read N- to C-terminus: Enteric beta-defensin (64 aa).

The signal sequence occupies residues 1 to 26 (MRLHHLLLTLLFLVLSAGSGFTQGIS). 3 disulfides stabilise this stretch: Cys-31/Cys-60, Cys-38/Cys-53, and Cys-43/Cys-61.

Belongs to the beta-defensin family. LAP/TAP subfamily. As to expression, inducibly expressed in enteric epithelial cells.

The protein resides in the secreted. Has antibacterial activity. The chain is Enteric beta-defensin (EBD) from Bos taurus (Bovine).